A 417-amino-acid polypeptide reads, in one-letter code: MPLYEGLGSGGEKTAVVIDLGEAFTKCGFAGETGPRCIIPSVIKRAGMSKPIKVVQYNINTEELYSYLKEFIHILYFRHLLVNPRDRRVVVIESVLCPSHFRETLTRVLFKYFEVPSVLLAPSHLMALLTLGINSAMVLDCGYRESLVLPIYEGIPILNCWGALPLGGKALHKELETQLLEQCTVDTGAAKGQSLPSVMGSVPEGVLEDIKVRTCFVSDLKRGLQIQAAKFNIDGNNERPTPPPNVDYPLDGEKILHVLGSIRDSVVEILFEQDNEEKSVATLILDSLLQCPIDTRKQLAENLVIIGGTSMLPGFLHRLLAEIRYLVEKPKYKKTLGTKNFRIHTPPAKANCVAWLGGAVFGALQDILGSRSISKEYYNQTGRIPDWCSLNNPPLEMMFDVGKAQPPLMKRAFSTEK.

This sequence belongs to the actin family. As to quaternary structure, subunit of dynactin, a multiprotein complex part of a tripartite complex with dynein and a adapter, such as BICDL1, BICD2 or HOOK3. The dynactin complex is built around ACTR1A/ACTB filament and consists of an actin-related filament composed of a shoulder domain, a pointed end and a barbed end. Its length is defined by its flexible shoulder domain. The soulder is composed of 2 DCTN1 subunits, 4 DCTN2 and 2 DCTN3. The 4 DCNT2 (via N-terminus) bind the ACTR1A filament and act as molecular rulers to determine the length. The pointed end is important for binding dynein-dynactin cargo adapters. Consists of 4 subunits: ACTR10, DCNT4, DCTN5 and DCTN6. The barbed end is composed of a CAPZA1:CAPZB heterodimers, which binds ACTR1A/ACTB filament and dynactin and stabilizes dynactin.

Its subcellular location is the cytoplasm. It localises to the cytoskeleton. Part of the dynactin complex that activates the molecular motor dynein for ultra-processive transport along microtubules. This is Actin-related protein 10 (Actr10) from Mus musculus (Mouse).